Consider the following 402-residue polypeptide: Enoyl-[acyl-carrier-protein] reductase [NADH] (402 aa).

Residues 48–53 (GASSGY), 74–75 (FE), 111–112 (DA), and 140–141 (LA) contribute to the NAD(+) site. Y226 provides a ligand contact to substrate. Catalysis depends on Y236, which acts as the Proton donor. NAD(+) is bound by residues K245 and 274–276 (VVT).

It belongs to the TER reductase family. Monomer.

It catalyses the reaction a 2,3-saturated acyl-[ACP] + NAD(+) = a (2E)-enoyl-[ACP] + NADH + H(+). The catalysed reaction is a 2,3-saturated acyl-CoA + NAD(+) = a (2E)-enoyl-CoA + NADH + H(+). The protein operates within lipid metabolism; fatty acid biosynthesis. Its function is as follows. Involved in the final reduction of the elongation cycle of fatty acid synthesis (FAS II). Catalyzes the reduction of a carbon-carbon double bond in an enoyl moiety that is covalently linked to an acyl carrier protein (ACP). It can also use crotonyl-CoA. The polypeptide is Enoyl-[acyl-carrier-protein] reductase [NADH] (Xanthomonas oryzae pv. oryzae (strain MAFF 311018)).